The sequence spans 309 residues: Methionyl-tRNA formyltransferase (309 aa).

Residue 107–110 (SLLP) participates in (6S)-5,6,7,8-tetrahydrofolate binding.

This sequence belongs to the Fmt family.

It catalyses the reaction L-methionyl-tRNA(fMet) + (6R)-10-formyltetrahydrofolate = N-formyl-L-methionyl-tRNA(fMet) + (6S)-5,6,7,8-tetrahydrofolate + H(+). In terms of biological role, attaches a formyl group to the free amino group of methionyl-tRNA(fMet). The formyl group appears to play a dual role in the initiator identity of N-formylmethionyl-tRNA by promoting its recognition by IF2 and preventing the misappropriation of this tRNA by the elongation apparatus. The sequence is that of Methionyl-tRNA formyltransferase from Borrelia duttonii (strain Ly).